We begin with the raw amino-acid sequence, 223 residues long: Flagellar L-ring protein 2 (223 aa).

The N-terminal stretch at 1–17 (MKWLSKSWAVAVVLLVG) is a signal peptide. The N-palmitoyl cysteine moiety is linked to residue C18. C18 is lipidated: S-diacylglycerol cysteine.

This sequence belongs to the FlgH family. As to quaternary structure, the basal body constitutes a major portion of the flagellar organelle and consists of four rings (L,P,S, and M) mounted on a central rod.

It localises to the cell outer membrane. It is found in the bacterial flagellum basal body. Functionally, assembles around the rod to form the L-ring and probably protects the motor/basal body from shearing forces during rotation. The protein is Flagellar L-ring protein 2 of Vibrio parahaemolyticus serotype O3:K6 (strain RIMD 2210633).